The following is a 238-amino-acid chain: Large ribosomal subunit protein uL2 (238 aa).

Over residues 1–11 (MGKRLISQNRG) the composition is skewed to polar residues. 2 disordered regions span residues 1–22 (MGKRLISQNRGRGTPTYRAPSH) and 202–223 (FGGGAWKHPGKPTTVSRNAPPG).

The protein belongs to the universal ribosomal protein uL2 family. As to quaternary structure, part of the 50S ribosomal subunit. Forms a bridge to the 30S subunit in the 70S ribosome.

In terms of biological role, one of the primary rRNA binding proteins. Required for association of the 30S and 50S subunits to form the 70S ribosome, for tRNA binding and peptide bond formation. It has been suggested to have peptidyltransferase activity; this is somewhat controversial. Makes several contacts with the 16S rRNA in the 70S ribosome. The protein is Large ribosomal subunit protein uL2 of Methanosarcina mazei (strain ATCC BAA-159 / DSM 3647 / Goe1 / Go1 / JCM 11833 / OCM 88) (Methanosarcina frisia).